A 513-amino-acid polypeptide reads, in one-letter code: Probable DNA ligase (513 aa).

E213 lines the ATP pocket. K215 serves as the catalytic N6-AMP-lysine intermediate. Residues R220, R235, E264, F304, R376, and K382 each coordinate ATP.

This sequence belongs to the ATP-dependent DNA ligase family. It depends on Mg(2+) as a cofactor.

It catalyses the reaction ATP + (deoxyribonucleotide)n-3'-hydroxyl + 5'-phospho-(deoxyribonucleotide)m = (deoxyribonucleotide)n+m + AMP + diphosphate.. Its function is as follows. DNA ligase that seals nicks in double-stranded DNA during DNA replication, DNA recombination and DNA repair. This is Probable DNA ligase from Anaeromyxobacter dehalogenans (strain 2CP-1 / ATCC BAA-258).